We begin with the raw amino-acid sequence, 188 residues long: MFLLVGLGNPGKEYEKTRHNIGFEAVDKISYEYNIPIKRERFKGVFGDGRISNEKVILLKPTTYMNLSGESLREIIEYYNIPITNVIVIYDDVDLEVGRLRIRTKGSAGGHNGIKSIIYNLNSEDFIRLRIGVGKPQRDMVSHVLGKFAKEDEKNIEEVLKIIPELAYTIINQGPQEAMNKYNNFRAE.

Position 14 (tyrosine 14) interacts with tRNA. The active-site Proton acceptor is the histidine 19. Tyrosine 64, asparagine 66, and asparagine 112 together coordinate tRNA.

It belongs to the PTH family. As to quaternary structure, monomer.

The protein resides in the cytoplasm. The enzyme catalyses an N-acyl-L-alpha-aminoacyl-tRNA + H2O = an N-acyl-L-amino acid + a tRNA + H(+). In terms of biological role, hydrolyzes ribosome-free peptidyl-tRNAs (with 1 or more amino acids incorporated), which drop off the ribosome during protein synthesis, or as a result of ribosome stalling. Functionally, catalyzes the release of premature peptidyl moieties from peptidyl-tRNA molecules trapped in stalled 50S ribosomal subunits, and thus maintains levels of free tRNAs and 50S ribosomes. The polypeptide is Peptidyl-tRNA hydrolase (Clostridium tetani (strain Massachusetts / E88)).